A 405-amino-acid chain; its full sequence is Tryptophan synthase beta chain (405 aa).

Lysine 98 is subject to N6-(pyridoxal phosphate)lysine.

It belongs to the TrpB family. As to quaternary structure, tetramer of two alpha and two beta chains. The cofactor is pyridoxal 5'-phosphate.

The catalysed reaction is (1S,2R)-1-C-(indol-3-yl)glycerol 3-phosphate + L-serine = D-glyceraldehyde 3-phosphate + L-tryptophan + H2O. The protein operates within amino-acid biosynthesis; L-tryptophan biosynthesis; L-tryptophan from chorismate: step 5/5. In terms of biological role, the beta subunit is responsible for the synthesis of L-tryptophan from indole and L-serine. The sequence is that of Tryptophan synthase beta chain from Xanthomonas euvesicatoria pv. vesicatoria (strain 85-10) (Xanthomonas campestris pv. vesicatoria).